Consider the following 745-residue polypeptide: 5-methyltetrahydropteroyltriglutamate--homocysteine methyltransferase (745 aa).

5-methyltetrahydropteroyltri-L-glutamate contacts are provided by residues 17–20 and lysine 111; that span reads RELK. L-homocysteine contacts are provided by residues 421 to 423 and glutamate 474; that span reads IGS. L-methionine is bound by residues 421–423 and glutamate 474; that span reads IGS. 5-methyltetrahydropteroyltri-L-glutamate contacts are provided by residues 505 to 506 and tryptophan 551; that span reads RC. Aspartate 589 is an L-homocysteine binding site. L-methionine is bound at residue aspartate 589. Glutamate 595 is a 5-methyltetrahydropteroyltri-L-glutamate binding site. The Zn(2+) site is built by histidine 631, cysteine 633, and glutamate 655. Histidine 684 (proton donor) is an active-site residue. Residue cysteine 716 coordinates Zn(2+).

The protein belongs to the vitamin-B12 independent methionine synthase family. The cofactor is Zn(2+).

The enzyme catalyses 5-methyltetrahydropteroyltri-L-glutamate + L-homocysteine = tetrahydropteroyltri-L-glutamate + L-methionine. Its pathway is amino-acid biosynthesis; L-methionine biosynthesis via de novo pathway; L-methionine from L-homocysteine (MetE route): step 1/1. Its function is as follows. Catalyzes the transfer of a methyl group from 5-methyltetrahydrofolate to homocysteine resulting in methionine formation. In Thermodesulfovibrio yellowstonii (strain ATCC 51303 / DSM 11347 / YP87), this protein is 5-methyltetrahydropteroyltriglutamate--homocysteine methyltransferase.